Consider the following 174-residue polypeptide: Translation initiation factor IF-3 (174 aa).

It belongs to the IF-3 family. Monomer.

The protein localises to the cytoplasm. IF-3 binds to the 30S ribosomal subunit and shifts the equilibrium between 70S ribosomes and their 50S and 30S subunits in favor of the free subunits, thus enhancing the availability of 30S subunits on which protein synthesis initiation begins. This chain is Translation initiation factor IF-3, found in Helicobacter hepaticus (strain ATCC 51449 / 3B1).